We begin with the raw amino-acid sequence, 901 residues long: HTH-type transcriptional regulator MalT (901 aa).

39–46 (SPAGYGKT) contacts ATP. The 66-residue stretch at 829–894 (ELIRTSPLTQ…DAVQHAQQLL (66 aa)) folds into the HTH luxR-type domain. Positions 853 to 872 (NEQIAGELAVAATTIKTHIR) form a DNA-binding region, H-T-H motif.

It belongs to the MalT family. Monomer in solution. Oligomerizes to an active state in the presence of the positive effectors ATP and maltotriose.

Activated by ATP and maltotriose, which are both required for DNA binding. Positively regulates the transcription of the maltose regulon whose gene products are responsible for uptake and catabolism of malto-oligosaccharides. Specifically binds to the promoter region of its target genes, recognizing a short DNA motif called the MalT box. The chain is HTH-type transcriptional regulator MalT from Enterobacter sp. (strain 638).